The following is a 634-amino-acid chain: Glutamyl-tRNA(Gln) amidotransferase subunit E (634 aa).

It belongs to the GatB/GatE family. GatE subfamily. Heterodimer of GatD and GatE.

The enzyme catalyses L-glutamyl-tRNA(Gln) + L-glutamine + ATP + H2O = L-glutaminyl-tRNA(Gln) + L-glutamate + ADP + phosphate + H(+). In terms of biological role, allows the formation of correctly charged Gln-tRNA(Gln) through the transamidation of misacylated Glu-tRNA(Gln) in organisms which lack glutaminyl-tRNA synthetase. The reaction takes place in the presence of glutamine and ATP through an activated gamma-phospho-Glu-tRNA(Gln). The GatDE system is specific for glutamate and does not act on aspartate. The polypeptide is Glutamyl-tRNA(Gln) amidotransferase subunit E (Sulfolobus acidocaldarius (strain ATCC 33909 / DSM 639 / JCM 8929 / NBRC 15157 / NCIMB 11770)).